Here is a 193-residue protein sequence, read N- to C-terminus: dCTP deaminase (193 aa).

DCTP is bound by residues 110 to 115 (RSSLAR), D128, 136 to 138 (VLE), Y171, K178, and Q182. Residue E138 is the Proton donor/acceptor of the active site.

The protein belongs to the dCTP deaminase family. Homotrimer.

The catalysed reaction is dCTP + H2O + H(+) = dUTP + NH4(+). Its pathway is pyrimidine metabolism; dUMP biosynthesis; dUMP from dCTP (dUTP route): step 1/2. Its function is as follows. Catalyzes the deamination of dCTP to dUTP. The polypeptide is dCTP deaminase (Aeromonas salmonicida (strain A449)).